Reading from the N-terminus, the 138-residue chain is F-box protein At4g12382 (138 aa).

An F-box domain is found at 7–53 (NPSFADLPSSLIEVIMSHLALKNNIRASAACKSWYEVGVSVRVVEKH).

This chain is F-box protein At4g12382, found in Arabidopsis thaliana (Mouse-ear cress).